A 100-amino-acid polypeptide reads, in one-letter code: Urease subunit gamma (100 aa).

Belongs to the urease gamma subunit family. In terms of assembly, heterotrimer of UreA (gamma), UreB (beta) and UreC (alpha) subunits. Three heterotrimers associate to form the active enzyme.

It is found in the cytoplasm. The catalysed reaction is urea + 2 H2O + H(+) = hydrogencarbonate + 2 NH4(+). Its pathway is nitrogen metabolism; urea degradation; CO(2) and NH(3) from urea (urease route): step 1/1. The protein is Urease subunit gamma of Bacillus sp. (strain TB-90).